The following is a 508-amino-acid chain: UTP--glucose-1-phosphate uridylyltransferase (508 aa).

Ser2 carries the blocked amino end (Ser) modification. Ser13 carries the post-translational modification Phosphoserine. Residues 113–116, Lys127, Gln190, and Gly222 contribute to the UTP site; that span reads LNGG. 115–116 contributes to the substrate binding site; the sequence is GG. Lys127 contacts Mg(2+). Substrate contacts are provided by residues His223 and 251-253; that span reads NID. Residues Asp253 and Lys396 each contribute to the UTP site. Residue Asp253 coordinates Mg(2+). Lys396 is an active-site residue. Thr426 is modified (phosphothreonine). Position 434 is a phosphoserine (Ser434). Lys438 is modified (N6-acetyllysine). Phosphoserine occurs at positions 448 and 461. Positions 457 to 508 are oligomerization; the sequence is HLTVSGDVTFGKNVSLKGTVIIIANHGDRIDIPPGAVLENKIVSGNLRILDH. A critical for end-to-end subunit interaction region spans residues 502–503; that stretch reads NL.

Belongs to the UDPGP type 1 family. Homooctamer.

Its subcellular location is the cytoplasm. It catalyses the reaction alpha-D-glucose 1-phosphate + UTP + H(+) = UDP-alpha-D-glucose + diphosphate. It functions in the pathway glycan biosynthesis; glycogen biosynthesis. Its function is as follows. UTP--glucose-1-phosphate uridylyltransferase catalyzing the conversion of glucose-1-phosphate into UDP-glucose, a crucial precursor for the production of glycogen. In Bos taurus (Bovine), this protein is UTP--glucose-1-phosphate uridylyltransferase (UGP2).